The sequence spans 332 residues: Glyoxylate reductase (332 aa).

NADP(+)-binding positions include 155–158 (MGRI) and 236–238 (TSR). Active-site residues include R238 and E267. H286 functions as the Proton donor in the catalytic mechanism. 286–288 (HAA) contacts NADP(+).

It belongs to the D-isomer specific 2-hydroxyacid dehydrogenase family. GyaR subfamily. Homodimer.

Its subcellular location is the cytoplasm. It catalyses the reaction glycolate + NAD(+) = glyoxylate + NADH + H(+). This Korarchaeum cryptofilum (strain OPF8) protein is Glyoxylate reductase.